The chain runs to 316 residues: Delta(1)-pyrroline-2-carboxylate reductase (316 aa).

The protein belongs to the ornithine cyclodeaminase/mu-crystallin family.

The catalysed reaction is L-proline + NAD(+) = 1-pyrroline-2-carboxylate + NADH + H(+). It carries out the reaction L-proline + NADP(+) = 1-pyrroline-2-carboxylate + NADPH + H(+). Catalyzes the reduction of Delta(1)-pyrroline-2-carboxylate (Pyr2C) to L-proline, using preferentially NADPH over NADH as the electron donor. Is likely involved in a degradation pathway that converts trans-3-hydroxy-L-proline (t3LHyp) to L-proline, which would allow P.denitrificans to grow on t3LHyp as a sole carbon source. The polypeptide is Delta(1)-pyrroline-2-carboxylate reductase (Paracoccus denitrificans (strain Pd 1222)).